Consider the following 371-residue polypeptide: MLKFTLHKKDGLARRGTLELNHGKIETPVFMPVGTYGSVKAMNPQNLHDIKAQIILGNTYHLWLRPGLEVVEQFGGLHGFIGWDKPILTDSGGFQVFSLSDMRKLTEEGCTFKSPINGDKLFLSPEISMKIQTVLNSDIAMQLDECTPGETTREQARKSLQMSLRWAERSKKAFEDLKNPNALFGIVQGAMYEDLREESLRGLEEFDFPGLAVGGLSVGEPKPEMYRMLHAVGPMLPERKPHYLMGVGTPEDLVYGVAHGIDMFDCVMPTRNARNGWLFTRFGDLKIKNAKHKPDKRPIDESCTCYACQNFSRAYLHHLHRAGEILGAQLNTIHNLHFYQVIMAEMRDAVEQGKFADWQAQFHENRARGVD.

Aspartate 90 serves as the catalytic Proton acceptor. Substrate is bound by residues 90–94 (DSGGF), aspartate 144, glutamine 188, and glycine 215. The tract at residues 246–252 (GVGTPED) is RNA binding. Catalysis depends on aspartate 265, which acts as the Nucleophile. Residues 270 to 274 (TRNAR) are RNA binding; important for wobble base 34 recognition. Positions 303, 305, 308, and 334 each coordinate Zn(2+).

Belongs to the queuine tRNA-ribosyltransferase family. As to quaternary structure, homodimer. Within each dimer, one monomer is responsible for RNA recognition and catalysis, while the other monomer binds to the replacement base PreQ1. Zn(2+) is required as a cofactor.

The enzyme catalyses 7-aminomethyl-7-carbaguanine + guanosine(34) in tRNA = 7-aminomethyl-7-carbaguanosine(34) in tRNA + guanine. It participates in tRNA modification; tRNA-queuosine biosynthesis. Catalyzes the base-exchange of a guanine (G) residue with the queuine precursor 7-aminomethyl-7-deazaguanine (PreQ1) at position 34 (anticodon wobble position) in tRNAs with GU(N) anticodons (tRNA-Asp, -Asn, -His and -Tyr). Catalysis occurs through a double-displacement mechanism. The nucleophile active site attacks the C1' of nucleotide 34 to detach the guanine base from the RNA, forming a covalent enzyme-RNA intermediate. The proton acceptor active site deprotonates the incoming PreQ1, allowing a nucleophilic attack on the C1' of the ribose to form the product. After dissociation, two additional enzymatic reactions on the tRNA convert PreQ1 to queuine (Q), resulting in the hypermodified nucleoside queuosine (7-(((4,5-cis-dihydroxy-2-cyclopenten-1-yl)amino)methyl)-7-deazaguanosine). This Neisseria gonorrhoeae (strain ATCC 700825 / FA 1090) protein is Queuine tRNA-ribosyltransferase.